A 166-amino-acid chain; its full sequence is Transcription antitermination protein NusB (166 aa).

Positions 1–18 (MISDESDRFNPRDPKPAD) are enriched in basic and acidic residues. The segment at 1–28 (MISDESDRFNPRDPKPADAGKPSKSAKR) is disordered.

This sequence belongs to the NusB family.

Its function is as follows. Involved in transcription antitermination. Required for transcription of ribosomal RNA (rRNA) genes. Binds specifically to the boxA antiterminator sequence of the ribosomal RNA (rrn) operons. This is Transcription antitermination protein NusB from Pseudomonas putida (strain GB-1).